A 363-amino-acid chain; its full sequence is Chorismate synthase (363 aa).

NADP(+) is bound at residue Arg-48. Residues 125–127, 238–239, Gly-278, 293–297, and Arg-319 each bind FMN; these read RSS, NA, and KPTAS.

The protein belongs to the chorismate synthase family. Homotetramer. The cofactor is FMNH2.

The catalysed reaction is 5-O-(1-carboxyvinyl)-3-phosphoshikimate = chorismate + phosphate. It functions in the pathway metabolic intermediate biosynthesis; chorismate biosynthesis; chorismate from D-erythrose 4-phosphate and phosphoenolpyruvate: step 7/7. In terms of biological role, catalyzes the anti-1,4-elimination of the C-3 phosphate and the C-6 proR hydrogen from 5-enolpyruvylshikimate-3-phosphate (EPSP) to yield chorismate, which is the branch point compound that serves as the starting substrate for the three terminal pathways of aromatic amino acid biosynthesis. This reaction introduces a second double bond into the aromatic ring system. In Acinetobacter baumannii (strain AB0057), this protein is Chorismate synthase.